The sequence spans 847 residues: B-cell receptor CD22 (847 aa).

An N-terminal signal peptide occupies residues 1–19 (MHLLGPWLLLLVLEYLAFS). Positions 20–138 (DSSKWAFEHP…MERIHLNVSE (119 aa)) constitute an Ig-like V-type domain. Residues 20 to 687 (DSSKWAFEHP…YYSPETIGRR (668 aa)) are Extracellular-facing. Residues asparagine 67, asparagine 101, and asparagine 112 are each glycosylated (N-linked (GlcNAc...) asparagine). Arginine 120 contacts N-acetylneuraminate. Asparagine 135, asparagine 164, and asparagine 231 each carry an N-linked (GlcNAc...) asparagine glycan. 6 Ig-like C2-type domains span residues 143-235 (PHIQ…DTVQ), 242-326 (PKLE…VFLQ), 331-416 (PEPS…LDVQ), 419-500 (PKKV…VALN), 505-582 (PRDV…QTAS), and 593-676 (PRRL…STLT). A disulfide bond links cysteine 161 and cysteine 219. Cystine bridges form between cysteine 265–cysteine 309 and cysteine 353–cysteine 396. 5 N-linked (GlcNAc...) asparagine glycosylation sites follow: asparagine 363, asparagine 428, asparagine 445, asparagine 448, and asparagine 479. Cystine bridges form between cysteine 442/cysteine 484 and cysteine 529/cysteine 571. N-linked (GlcNAc...) asparagine glycans are attached at residues asparagine 574 and asparagine 634. Cysteine 616 and cysteine 659 are joined by a disulfide. The chain crosses the membrane as a helical span at residues 688-708 (VAVGFGSCLAILILAICGLKL). The Cytoplasmic segment spans residues 709 to 847 (QRRWKRTQSQ…ENVDYVILKH (139 aa)). Residues serine 725, serine 726, and serine 729 each carry the phosphoserine modification. Short sequence motifs (ITIM motif) lie at residues 760–765 (ISYTTL) and 794–799 (VTYSVL). Tyrosine 762 is subject to Phosphotyrosine. Phosphotyrosine occurs at positions 807, 822, and 842. 2 short sequence motifs (ITIM motif) span residues 820–825 (IHYSEL) and 840–845 (VDYVIL).

It belongs to the immunoglobulin superfamily. SIGLEC (sialic acid binding Ig-like lectin) family. In terms of assembly, predominantly monomer of isoform CD22-beta. Also found as heterodimer of isoform CD22-beta and a shorter isoform. Interacts with PTPN6/SHP-1, LYN, SYK, PIK3R1/PIK3R2 and PLCG1 upon phosphorylation. Interacts with GRB2, INPP5D and SHC1 upon phosphorylation. May form a complex with INPP5D/SHIP, GRB2 and SHC1. In terms of processing, phosphorylation of Tyr-762, Tyr-807 and Tyr-822 are involved in binding to SYK, GRB2 and SYK, respectively. Phosphorylation of Tyr-842 is involved in binding to SYK, PLCG2 and PIK3R1/PIK3R2. Post-translationally, phosphorylated on tyrosine residues by LYN.

The protein resides in the cell membrane. In terms of biological role, most highly expressed siglec (sialic acid-binding immunoglobulin-like lectin) on B-cells that plays a role in various aspects of B-cell biology including differentiation, antigen presentation, and trafficking to bone marrow. Binds to alpha 2,6-linked sialic acid residues of surface molecules such as CD22 itself, CD45 and IgM in a cis configuration. Can also bind to ligands on other cells as an adhesion molecule in a trans configuration. Acts as an inhibitory coreceptor on the surface of B-cells and inhibits B-cell receptor induced signaling, characterized by inhibition of the calcium mobilization and cellular activation. Mechanistically, the immunoreceptor tyrosine-based inhibitory motif domain is phosphorylated by the Src kinase LYN, which in turn leads to the recruitment of the protein tyrosine phosphatase 1/PTPN6, leading to the negative regulation of BCR signaling. If this negative signaling from is of sufficient strength, apoptosis of the B-cell can be induced. The chain is B-cell receptor CD22 from Pan paniscus (Pygmy chimpanzee).